A 452-amino-acid polypeptide reads, in one-letter code: Phosphoglucosamine mutase (452 aa).

The active-site Phosphoserine intermediate is the S108. 4 residues coordinate Mg(2+): S108, D247, D249, and D251. Residue S108 is modified to Phosphoserine.

It belongs to the phosphohexose mutase family. It depends on Mg(2+) as a cofactor. In terms of processing, activated by phosphorylation.

It carries out the reaction alpha-D-glucosamine 1-phosphate = D-glucosamine 6-phosphate. In terms of biological role, catalyzes the conversion of glucosamine-6-phosphate to glucosamine-1-phosphate. This is Phosphoglucosamine mutase from Burkholderia mallei (strain NCTC 10247).